We begin with the raw amino-acid sequence, 433 residues long: Serine--tRNA ligase (433 aa).

Position 235-237 (235-237) interacts with L-serine; sequence TSE. 266 to 268 is an ATP binding site; the sequence is RSE. Glutamate 289 contacts L-serine. Position 353–356 (353–356) interacts with ATP; the sequence is EISS. Serine 388 is a binding site for L-serine.

Belongs to the class-II aminoacyl-tRNA synthetase family. Type-1 seryl-tRNA synthetase subfamily. In terms of assembly, homodimer. The tRNA molecule binds across the dimer.

It localises to the cytoplasm. It carries out the reaction tRNA(Ser) + L-serine + ATP = L-seryl-tRNA(Ser) + AMP + diphosphate + H(+). The enzyme catalyses tRNA(Sec) + L-serine + ATP = L-seryl-tRNA(Sec) + AMP + diphosphate + H(+). The protein operates within aminoacyl-tRNA biosynthesis; selenocysteinyl-tRNA(Sec) biosynthesis; L-seryl-tRNA(Sec) from L-serine and tRNA(Sec): step 1/1. Functionally, catalyzes the attachment of serine to tRNA(Ser). Is also able to aminoacylate tRNA(Sec) with serine, to form the misacylated tRNA L-seryl-tRNA(Sec), which will be further converted into selenocysteinyl-tRNA(Sec). The protein is Serine--tRNA ligase of Burkholderia orbicola (strain MC0-3).